A 382-amino-acid polypeptide reads, in one-letter code: Prostaglandin D2 receptor 2 (382 aa).

The Extracellular segment spans residues 1–32 (MANVTLKPLCPLLEEMVQLPNHSNSSLRYIDH). N-linked (GlcNAc...) asparagine glycosylation is found at N3, N21, and N24. The chain crosses the membrane as a helical span at residues 33-55 (VSVLLHGLASLLGLVENGLILFV). Over 56–66 (VGCRMRQTVVT) the chain is Cytoplasmic. The chain crosses the membrane as a helical span at residues 67 to 88 (TWVLHLALSDLLAAASLPFFTY). The Extracellular segment spans residues 89–105 (FLAVGHSWELGTTFCKL). C103 and C181 are disulfide-bonded. The chain crosses the membrane as a helical span at residues 106-126 (HSSVFFLNMFASGFLLSAISL). Over 127-145 (DRCLQVVRPVWAQNHRTVA) the chain is Cytoplasmic. A helical transmembrane segment spans residues 146 to 167 (VAHRVCLMLWALAVLNTIPYFV). The Extracellular segment spans residues 168 to 209 (FRDTIPRLDGRIMCYYNLLLWNPGPDRDTTCDYRQKALAVSK). Residues 210 to 230 (FLLAFMVPLAIIASSHVAVSL) traverse the membrane as a helical segment. At 231–246 (RLHHRGRQRTGRFVRL) the chain is on the cytoplasmic side. A helical membrane pass occupies residues 247 to 268 (VAAIVVAFVLCWGPYHIFSLLE). At 269–287 (ARAHSVTTLRQLASRGLPF) the chain is on the extracellular side. The chain crosses the membrane as a helical span at residues 288 to 307 (VTSLAFFNSVVNPLLYVFTC). The Cytoplasmic portion of the chain corresponds to 308–357 (PDMLYKLRRSLRAVLESVLVEDSDQSGGLRNRRRRASSTATPASTLLLAD). The Involved in the recycling of CRTH2 signature appears at 329–332 (DSDQ). S330 and S344 each carry phosphoserine.

This sequence belongs to the G-protein coupled receptor 1 family. Post-translationally, phosphorylated.

The protein localises to the cell membrane. Functionally, receptor for prostaglandin D2 (PGD2). Coupled to the G(i)-protein. Receptor activation may result in pertussis toxin-sensitive decreases in cAMP levels and Ca(2+) mobilization. PI3K signaling is also implicated in mediating PTGDR2 effects. PGD2 induced receptor internalization. CRTH2 internalization can be regulated by diverse kinases such as, PKC, PKA, GRK2, GPRK5/GRK5 and GRK6. Receptor activation is responsible, at least in part, in immune regulation and allergic/inflammation responses. This is Prostaglandin D2 receptor 2 (Ptgdr2) from Mus musculus (Mouse).